We begin with the raw amino-acid sequence, 485 residues long: Palmitoyltransferase ZDHHC1 (485 aa).

Positions 1–41 are disordered; that stretch reads MYKMNICNKPSNKTAPEKSVWTAPAQPSGPSPELQGQRSRR. The Cytoplasmic portion of the chain corresponds to 1–52; the sequence is MYKMNICNKPSNKTAPEKSVWTAPAQPSGPSPELQGQRSRRNGWSWPPHPLQ. Residues 1-271 form a mediates interaction with STING1 region; that stretch reads MYKMNICNKP…GHLLCFHIYL (271 aa). The helical transmembrane segment at 53–73 threads the bilayer; the sequence is IVAWLLYLFFAVIGFGILVPL. Topologically, residues 74–77 are lumenal; the sequence is LPHH. A helical membrane pass occupies residues 78 to 98; it reads WVPAGYACMGAIFAGHLVVHL. The Cytoplasmic segment spans residues 99 to 185; sequence TAVSIDPADA…YRLFLHSVAS (87 aa). One can recognise a DHHC domain in the interval 134–184; it reads LHCNLCNVDVSARSKHCSACNKCVCGFDHHCKWLNNCVGERNYRLFLHSVA. Cys-164 functions as the S-palmitoyl cysteine intermediate in the catalytic mechanism. A helical transmembrane segment spans residues 186–206; it reads ALLGVLLLVLVATYVFVEFFV. Topologically, residues 207-241 are lumenal; the sequence is NPMRLRTNRHFEVLKNHTDVWFVFLPAAPVETQAP. Residues 242–262 form a helical membrane-spanning segment; it reads AILALAALLILLGLLSTALLG. Residues 263–485 lie on the Cytoplasmic side of the membrane; that stretch reads HLLCFHIYLM…RGRRVRPPFS (223 aa). Disordered stretches follow at residues 324–358 and 462–485; these read EPPG…GPPV and LWPP…PPFS. A compositionally biased stretch (basic residues) spans 475–485; the sequence is WRGRRVRPPFS.

The protein belongs to the DHHC palmitoyltransferase family. In terms of assembly, interacts with STING1; ZDHHC1 constitutively interacts with STING1 and in presence of DNA viruses activates it by promoting its cGAMP-induced oligomerization and the recruitment of downstream signaling components. In terms of tissue distribution, widely expressed with significant expression in heart, brain, placenta, lung, liver, kidney, testis, thymus and small intestine. Expressed at lower levels in adult pancreas and lung.

It is found in the endosome membrane. Its subcellular location is the endoplasmic reticulum membrane. The protein localises to the golgi apparatus. It catalyses the reaction L-cysteinyl-[protein] + hexadecanoyl-CoA = S-hexadecanoyl-L-cysteinyl-[protein] + CoA. Palmitoyltransferase that catalyzes the addition of palmitate onto various protein substrates, such as NCDN and NLRP3. Has a palmitoyltransferase activity toward NCDN and regulates NCDN association with endosome membranes through this palmitoylation. Acts as an activator of the NLRP3 inflammasome by mediating palmitoylation of 'Cys-130' and 'Cys-958' of NLRP3, thereby promoting NLRP3 phosphorylation and activation by NEK7. Functionally, also has a palmitoyltransferase activity-independent function in DNA virus-triggered and CGAS-mediated innate immune response. Functions as an activator of STING1 by promoting its cGAMP-induced oligomerization and the recruitment of downstream signaling components. The polypeptide is Palmitoyltransferase ZDHHC1 (Homo sapiens (Human)).